We begin with the raw amino-acid sequence, 322 residues long: Undecaprenyl-phosphate 4-deoxy-4-formamido-L-arabinose transferase (322 aa).

The Cytoplasmic portion of the chain corresponds to 1–235 (MFEIHPVKKV…TCLTTTPLRM (235 aa)). The helical transmembrane segment at 236 to 256 (LSLLGSIIAIGGFSIAVLLVI) threads the bilayer. The Periplasmic portion of the chain corresponds to 257-269 (LRLTFGPQWAAEG). The chain crosses the membrane as a helical span at residues 270–290 (VFMLFAVLFTFIGAQFIGMGL). At 291 to 322 (LGEYIGRIYTDVRARPRYFVQQVIRPSSKENE) the chain is on the cytoplasmic side.

The protein belongs to the glycosyltransferase 2 family.

It is found in the cell inner membrane. It catalyses the reaction UDP-4-deoxy-4-formamido-beta-L-arabinose + di-trans,octa-cis-undecaprenyl phosphate = 4-deoxy-4-formamido-alpha-L-arabinopyranosyl di-trans,octa-cis-undecaprenyl phosphate + UDP. It functions in the pathway glycolipid biosynthesis; 4-amino-4-deoxy-alpha-L-arabinose undecaprenyl phosphate biosynthesis; 4-amino-4-deoxy-alpha-L-arabinose undecaprenyl phosphate from UDP-4-deoxy-4-formamido-beta-L-arabinose and undecaprenyl phosphate: step 1/2. Its pathway is bacterial outer membrane biogenesis; lipopolysaccharide biosynthesis. Its function is as follows. Catalyzes the transfer of 4-deoxy-4-formamido-L-arabinose from UDP to undecaprenyl phosphate. The modified arabinose is attached to lipid A and is required for resistance to polymyxin and cationic antimicrobial peptides. The polypeptide is Undecaprenyl-phosphate 4-deoxy-4-formamido-L-arabinose transferase (Shigella flexneri).